The primary structure comprises 650 residues: Threonine--tRNA ligase (650 aa).

The 63-residue stretch at 5–67 (NKSMFIKLKD…QEGDQVILWG (63 aa)) folds into the TGS domain. Residues 246–537 (DHKLLGAKLD…LIEHYVGKFP (292 aa)) form a catalytic region. Zn(2+) contacts are provided by Cys337, His388, and His514.

It belongs to the class-II aminoacyl-tRNA synthetase family. In terms of assembly, homodimer. Zn(2+) is required as a cofactor.

It localises to the cytoplasm. It catalyses the reaction tRNA(Thr) + L-threonine + ATP = L-threonyl-tRNA(Thr) + AMP + diphosphate + H(+). Functionally, catalyzes the attachment of threonine to tRNA(Thr) in a two-step reaction: L-threonine is first activated by ATP to form Thr-AMP and then transferred to the acceptor end of tRNA(Thr). Also edits incorrectly charged L-seryl-tRNA(Thr). This chain is Threonine--tRNA ligase, found in Protochlamydia amoebophila (strain UWE25).